Reading from the N-terminus, the 160-residue chain is Phosphopantetheine adenylyltransferase (160 aa).

Thr-9 provides a ligand contact to substrate. Residues 9-10 and His-17 contribute to the ATP site; that span reads TF. Substrate-binding residues include Lys-41, Leu-73, and Arg-87. Residues 88-90, Glu-98, and 123-129 each bind ATP; these read GLR and YMFISAS.

This sequence belongs to the bacterial CoaD family. As to quaternary structure, homohexamer. Mg(2+) is required as a cofactor.

Its subcellular location is the cytoplasm. It carries out the reaction (R)-4'-phosphopantetheine + ATP + H(+) = 3'-dephospho-CoA + diphosphate. Its pathway is cofactor biosynthesis; coenzyme A biosynthesis; CoA from (R)-pantothenate: step 4/5. Its function is as follows. Reversibly transfers an adenylyl group from ATP to 4'-phosphopantetheine, yielding dephospho-CoA (dPCoA) and pyrophosphate. The chain is Phosphopantetheine adenylyltransferase from Thiobacillus denitrificans (strain ATCC 25259 / T1).